Consider the following 417-residue polypeptide: Serine hydroxymethyltransferase (417 aa).

(6S)-5,6,7,8-tetrahydrofolate-binding positions include L120 and 124-126 (GHL). K229 is subject to N6-(pyridoxal phosphate)lysine. A (6S)-5,6,7,8-tetrahydrofolate-binding site is contributed by 354 to 356 (SPF).

This sequence belongs to the SHMT family. As to quaternary structure, homodimer. Pyridoxal 5'-phosphate is required as a cofactor.

Its subcellular location is the cytoplasm. The catalysed reaction is (6R)-5,10-methylene-5,6,7,8-tetrahydrofolate + glycine + H2O = (6S)-5,6,7,8-tetrahydrofolate + L-serine. It participates in one-carbon metabolism; tetrahydrofolate interconversion. Its pathway is amino-acid biosynthesis; glycine biosynthesis; glycine from L-serine: step 1/1. In terms of biological role, catalyzes the reversible interconversion of serine and glycine with tetrahydrofolate (THF) serving as the one-carbon carrier. This reaction serves as the major source of one-carbon groups required for the biosynthesis of purines, thymidylate, methionine, and other important biomolecules. Also exhibits THF-independent aldolase activity toward beta-hydroxyamino acids, producing glycine and aldehydes, via a retro-aldol mechanism. In Acinetobacter baylyi (strain ATCC 33305 / BD413 / ADP1), this protein is Serine hydroxymethyltransferase.